A 408-amino-acid polypeptide reads, in one-letter code: Protein ZNF365 (408 aa).

At S16 the chain carries Phosphoserine. The segment at 26 to 51 (FRCPRCGDHTRFRSLSSLRAHLEFSH) adopts a C2H2-type; degenerate zinc-finger fold. S139 and S146 each carry phosphoserine. A coiled-coil region spans residues 170–298 (VEAVDRTIEK…QLEYYQSQQA (129 aa)). Position 176 is a phosphothreonine (T176). S370 is modified (phosphoserine).

In terms of assembly, homodimers. Interacts with NDE1 and NDEL1. Interacts with DISC1. Interacts with PARP1. Interacts with MCRS1. Expressed in cerebral cortex, hippocampus, olfactory tubercle and striatum.

The protein resides in the cytoplasm. It localises to the cytoskeleton. The protein localises to the microtubule organizing center. Its subcellular location is the centrosome. Functionally, involved in the positive regulation of oligodendrocyte differentiation during postnatal growth. Involved in the morphogenesis of basket cells in the somatosensory cortex during embryogenesis. Involved in dendritic arborization, morphogenesis of spine density dendrite, and establishment of postsynaptic dendrite density in cortical pyramidal neurons. Involved in the regulation of neurogenesis. Negatively regulates neurite outgrowth. Involved in homologous recombination (HR) repair pathway. Required for proper resolution of DNA double-strand breaks (DSBs) by HR. Is required for recovery of stalled replication forks, and directly contributes to genomic stability. Interacts with PARP1 and mediates MRE11-dependent DNA end resection during replication fork recovery. Contributes to genomic stability by preventing telomere dysfunction. This Rattus norvegicus (Rat) protein is Protein ZNF365 (Znf365).